The sequence spans 127 residues: Ribonuclease P protein component 1 (127 aa).

This sequence belongs to the eukaryotic/archaeal RNase P protein component 1 family. As to quaternary structure, consists of a catalytic RNA component and at least 4 protein subunits. Forms a subcomplex with Rnp4 which stimulates the catalytic RNA.

It localises to the cytoplasm. It carries out the reaction Endonucleolytic cleavage of RNA, removing 5'-extranucleotides from tRNA precursor.. Part of ribonuclease P, a protein complex that generates mature tRNA molecules by cleaving their 5'-ends. The RNA is catalytic, but its KM for pre-tRNA is 170-fold decreased in the presence of the 4 known protein subunits (Rnp1-4). The protein subunits also decrease the amount of Mg(2+) needed for activity. This is Ribonuclease P protein component 1 from Pyrococcus furiosus (strain ATCC 43587 / DSM 3638 / JCM 8422 / Vc1).